A 72-amino-acid chain; its full sequence is Protein SlyX (72 aa).

The tract at residues 53 to 72 is disordered; the sequence is KSSQSSMLARPEDETPPPHY.

It belongs to the SlyX family.

The protein is Protein SlyX of Proteus mirabilis (strain HI4320).